The following is a 396-amino-acid chain: Obg-like ATPase 1 (396 aa).

Positions Leu-23–Leu-283 constitute an OBG-type G domain. Position 32-37 (Asn-32–Thr-37) interacts with ATP. Positions 36 and 56 each coordinate Mg(2+). Position 231 (Leu-231) interacts with ATP. The Nuclear export signal signature appears at Leu-267–Leu-274. An N6-acetyllysine modification is found at Lys-294. The region spanning Gln-304–Phe-387 is the TGS domain.

This sequence belongs to the TRAFAC class OBG-HflX-like GTPase superfamily. OBG GTPase family. YchF/OLA1 subfamily. As to quaternary structure, monomer. It depends on Mg(2+) as a cofactor.

Its subcellular location is the cytoplasm. It localises to the nucleus. The protein resides in the nucleolus. Functionally, hydrolyzes ATP, and can also hydrolyze GTP with lower efficiency. Has lower affinity for GTP. The chain is Obg-like ATPase 1 from Bos taurus (Bovine).